The chain runs to 250 residues: Small ribosomal subunit protein uS2 (250 aa).

This sequence belongs to the universal ribosomal protein uS2 family.

The protein is Small ribosomal subunit protein uS2 of Paraburkholderia xenovorans (strain LB400).